The following is a 569-amino-acid chain: Pyrophosphate--fructose 6-phosphate 1-phosphotransferase subunit beta 2 (569 aa).

Diphosphate is bound at residue G107. Residue D201 participates in Mg(2+) binding. Substrate contacts are provided by residues 229-231 (TID), 268-269 (KY), 276-278 (MGR), E337, and 442-445 (YEGR). D231 (proton acceptor) is an active-site residue.

This sequence belongs to the phosphofructokinase type A (PFKA) family. PPi-dependent PFK group II subfamily. Clade 'Long' sub-subfamily. Tetramer of two alpha (regulatory) and two beta (catalytic) chains. It depends on Mg(2+) as a cofactor.

The protein localises to the cytoplasm. The catalysed reaction is beta-D-fructose 6-phosphate + diphosphate = beta-D-fructose 1,6-bisphosphate + phosphate + H(+). It functions in the pathway carbohydrate degradation; glycolysis; D-glyceraldehyde 3-phosphate and glycerone phosphate from D-glucose: step 3/4. Allosterically activated by fructose 2,6-bisphosphate. Catalytic subunit of pyrophosphate--fructose 6-phosphate 1-phosphotransferase. Catalyzes the phosphorylation of D-fructose 6-phosphate, the first committing step of glycolysis. Uses inorganic phosphate (PPi) as phosphoryl donor instead of ATP like common ATP-dependent phosphofructokinases (ATP-PFKs), which renders the reaction reversible, and can thus function both in glycolysis and gluconeogenesis. This Arabidopsis thaliana (Mouse-ear cress) protein is Pyrophosphate--fructose 6-phosphate 1-phosphotransferase subunit beta 2.